The sequence spans 242 residues: Agamous-like MADS-box protein MADS4 (242 aa).

In terms of domain architecture, MADS-box spans Met-1–Ser-61. One can recognise a K-box domain in the interval Glu-89–Asn-185.

Expressed in flowers and seeds.

The protein localises to the nucleus. Probable transcription factor involved in flower development. In Vitis vinifera (Grape), this protein is Agamous-like MADS-box protein MADS4.